The sequence spans 273 residues: 1,4-dihydroxy-2-naphthoyl-CoA synthase (273 aa).

Residues arginine 34, 73-77, tyrosine 85, 117-121, threonine 143, serine 149, tyrosine 246, and lysine 261 contribute to the substrate site; these read SGGDQ and YAVGG. 142 to 144 contacts hydrogencarbonate; that stretch reads QTG. Basic and acidic residues predominate over residues 254-265; sequence GRDAFKEKRDPD. The disordered stretch occupies residues 254 to 273; that stretch reads GRDAFKEKRDPDFDQFPKFP.

This sequence belongs to the enoyl-CoA hydratase/isomerase family. MenB subfamily. Hydrogencarbonate is required as a cofactor.

It catalyses the reaction 2-succinylbenzoyl-CoA + H(+) = 1,4-dihydroxy-2-naphthoyl-CoA + H2O. Its pathway is quinol/quinone metabolism; 1,4-dihydroxy-2-naphthoate biosynthesis; 1,4-dihydroxy-2-naphthoate from chorismate: step 6/7. The protein operates within quinol/quinone metabolism; menaquinone biosynthesis. Converts o-succinylbenzoyl-CoA (OSB-CoA) to 1,4-dihydroxy-2-naphthoyl-CoA (DHNA-CoA). In Staphylococcus aureus (strain MRSA252), this protein is 1,4-dihydroxy-2-naphthoyl-CoA synthase.